The primary structure comprises 1045 residues: DNA polymerase (1045 aa).

The tract at residues 331–355 is disordered; the sequence is IKENEESDSESDNDDEEDKKENDGA. Acidic residues predominate over residues 335–348; sequence EESDSESDNDDEED.

It belongs to the DNA polymerase type-B family.

It carries out the reaction DNA(n) + a 2'-deoxyribonucleoside 5'-triphosphate = DNA(n+1) + diphosphate. The chain is DNA polymerase (dpo) from Phaeocystis pouchetii (PpV01).